Consider the following 293-residue polypeptide: 3-hydroxybutyrate-oligomer hydrolase (293 aa).

Belongs to the AB hydrolase superfamily.

The protein resides in the cytoplasm. The enzyme catalyses (3R)-hydroxybutanoate pentamer + H2O = (3R)-hydroxybutanoate tetramer + (R)-3-hydroxybutanoate + H(+). It catalyses the reaction (3R)-hydroxybutanoate tetramer + H2O = (3R)-hydroxybutanoate trimer + (R)-3-hydroxybutanoate + H(+). It carries out the reaction (3R)-hydroxybutanoate trimer + H2O = (3R)-hydroxybutanoate dimer + (R)-3-hydroxybutanoate + H(+). The catalysed reaction is (3R)-hydroxybutanoate dimer + H2O = 2 (R)-3-hydroxybutanoate + H(+). The enzyme catalyses [(3R)-hydroxybutanoate](n) + H2O = [(3R)-hydroxybutanoate](n-1) + (R)-3-hydroxybutanoate + H(+). Its function is as follows. Catalyzes the degradation of various 3-hydroxybutyrate (3HB) oligomers at a high specific activity and artificial amorphous poly(3-hydroxybutyrate) (PHB) at a lower specific activity. Hydrolyzes the 3HB pentamer most efficiently than the tetramer, trimer and dimer. Does not hydrolyze native PHB granules and semicrystalline PHB. Participates in the mobilization of PHB along with other hydrolases. The sequence is that of 3-hydroxybutyrate-oligomer hydrolase from Cupriavidus necator (strain ATCC 17699 / DSM 428 / KCTC 22496 / NCIMB 10442 / H16 / Stanier 337) (Ralstonia eutropha).